The chain runs to 1594 residues: Calpain-D (1594 aa).

2 RanBP2-type zinc fingers span residues 1–35 (MGTI…VRKV) and 135–164 (LNRR…VSYL). Disordered stretches follow at residues 210-256 (EEQH…TAID), 371-400 (EPQQ…NPTQ), 420-459 (ASSS…SSSG), 524-543 (KKKQ…GSGE), and 554-606 (AGLG…RLSG). Positions 215 to 229 (HQLHSQHLHKRHLKG) are enriched in basic residues. Composition is skewed to polar residues over residues 246–255 (RRTQSLSTAI) and 371–385 (EPQQ…QLQR). Ser250 is modified (phosphoserine). A compositionally biased stretch (low complexity) spans 438 to 459 (NSNSNSSGNSNIINNNSSSSSG). Polar residues predominate over residues 528–541 (QIASESQTNNNTGS). The RanBP2-type 3 zinc-finger motif lies at 643–673 (RSKMWICIKCSYAYNRLWLQTCEMCEAKAEQ). The segment at 684 to 703 (QQQQQQHHHHHLQQQQAEAP) is disordered. RanBP2-type zinc fingers lie at residues 704–733 (RDEP…SKLK) and 744–774 (RKGE…HRQP). Disordered regions lie at residues 786–811 (RPDG…HQSG) and 860–884 (SLQQ…GSIV). Residues 860–871 (SLQQQRNSSSSG) are compositionally biased toward polar residues. The RanBP2-type 6 zinc-finger motif lies at 927–956 (STKKWQCPACTYDNCAASVVCDICSSPRGL). One can recognise a Calpain catalytic domain in the interval 1014–1321 (LFVDDSFPPA…FDCIDICKVR (308 aa)). Residues Cys1079, His1245, and Asn1265 contribute to the active site.

This sequence belongs to the peptidase C2 family.

Has a role in eye development. In terms of biological role, calcium-regulated non-lysosomal thiol-protease. The protein is Calpain-D (sol) of Drosophila melanogaster (Fruit fly).